The primary structure comprises 281 residues: uncharacterized protein (281 aa).

8 consecutive transmembrane segments (helical) span residues 30 to 50, 54 to 74, 76 to 96, 106 to 126, 153 to 173, 198 to 218, 235 to 255, and 259 to 279; these read AIVA…FIVI, VFIS…GYYF, FNPL…MGWV, TLIG…IDLT, AGLD…FLAI, IALT…IALL, MMAV…ALSY, and LSSG…SLAF.

The protein belongs to the ABC-3 integral membrane protein family.

The protein resides in the cell membrane. This is an uncharacterized protein from Synechocystis sp. (strain ATCC 27184 / PCC 6803 / Kazusa).